The chain runs to 69 residues: Cytochrome c oxidase subunit 8A, mitochondrial (69 aa).

A mitochondrion-targeting transit peptide spans 1 to 25; sequence MSVLTPLLLRGLTGSARRLPVPRAK. The SIFI-degron signature appears at 2-19; the sequence is SVLTPLLLRGLTGSARRL. Residues 26–36 lie on the Mitochondrial matrix side of the membrane; the sequence is IHSLPPDEKLG. The chain crosses the membrane as a helical span at residues 37–60; sequence IMELAVGLTSCFVTFLLPAGWILS. The Mitochondrial intermembrane segment spans residues 61–69; the sequence is HLETYRRPE.

The protein belongs to the cytochrome c oxidase VIII family. In terms of assembly, component of the cytochrome c oxidase (complex IV, CIV), a multisubunit enzyme composed of 14 subunits. The complex is composed of a catalytic core of 3 subunits MT-CO1, MT-CO2 and MT-CO3, encoded in the mitochondrial DNA, and 11 supernumerary subunits COX4I, COX5A, COX5B, COX6A, COX6B, COX6C, COX7A, COX7B, COX7C, COX8 and NDUFA4, which are encoded in the nuclear genome. The complex exists as a monomer or a dimer and forms supercomplexes (SCs) in the inner mitochondrial membrane with NADH-ubiquinone oxidoreductase (complex I, CI) and ubiquinol-cytochrome c oxidoreductase (cytochrome b-c1 complex, complex III, CIII), resulting in different assemblies (supercomplex SCI(1)III(2)IV(1) and megacomplex MCI(2)III(2)IV(2)). In terms of processing, in response to mitochondrial stress, the precursor protein is ubiquitinated by the SIFI complex in the cytoplasm before mitochondrial import, leading to its degradation. Within the SIFI complex, UBR4 initiates ubiquitin chain that are further elongated or branched by KCMF1.

Its subcellular location is the mitochondrion inner membrane. It participates in energy metabolism; oxidative phosphorylation. Component of the cytochrome c oxidase, the last enzyme in the mitochondrial electron transport chain which drives oxidative phosphorylation. The respiratory chain contains 3 multisubunit complexes succinate dehydrogenase (complex II, CII), ubiquinol-cytochrome c oxidoreductase (cytochrome b-c1 complex, complex III, CIII) and cytochrome c oxidase (complex IV, CIV), that cooperate to transfer electrons derived from NADH and succinate to molecular oxygen, creating an electrochemical gradient over the inner membrane that drives transmembrane transport and the ATP synthase. Cytochrome c oxidase is the component of the respiratory chain that catalyzes the reduction of oxygen to water. Electrons originating from reduced cytochrome c in the intermembrane space (IMS) are transferred via the dinuclear copper A center (CU(A)) of subunit 2 and heme A of subunit 1 to the active site in subunit 1, a binuclear center (BNC) formed by heme A3 and copper B (CU(B)). The BNC reduces molecular oxygen to 2 water molecules using 4 electrons from cytochrome c in the IMS and 4 protons from the mitochondrial matrix. This Gorilla gorilla gorilla (Western lowland gorilla) protein is Cytochrome c oxidase subunit 8A, mitochondrial (COX8A).